Here is a 347-residue protein sequence, read N- to C-terminus: Holliday junction branch migration complex subunit RuvB (347 aa).

Positions 1-186 (MKDENSINFL…FGITARFELY (186 aa)) are large ATPase domain (RuvB-L). ATP-binding positions include leucine 25, arginine 26, glycine 67, lysine 70, threonine 71, threonine 72, 133 to 135 (EDY), arginine 176, tyrosine 186, and arginine 223. Position 71 (threonine 71) interacts with Mg(2+). The segment at 187–257 (SEIELVEIIK…IVSIGLEMLR (71 aa)) is small ATPAse domain (RuvB-S). The interval 260-347 (GEGLDEQDRN…DISENQRVSF (88 aa)) is head domain (RuvB-H). DNA-binding residues include arginine 315 and arginine 320.

Belongs to the RuvB family. In terms of assembly, homohexamer. Forms an RuvA(8)-RuvB(12)-Holliday junction (HJ) complex. HJ DNA is sandwiched between 2 RuvA tetramers; dsDNA enters through RuvA and exits via RuvB. An RuvB hexamer assembles on each DNA strand where it exits the tetramer. Each RuvB hexamer is contacted by two RuvA subunits (via domain III) on 2 adjacent RuvB subunits; this complex drives branch migration. In the full resolvosome a probable DNA-RuvA(4)-RuvB(12)-RuvC(2) complex forms which resolves the HJ.

It localises to the cytoplasm. It catalyses the reaction ATP + H2O = ADP + phosphate + H(+). Its function is as follows. The RuvA-RuvB-RuvC complex processes Holliday junction (HJ) DNA during genetic recombination and DNA repair, while the RuvA-RuvB complex plays an important role in the rescue of blocked DNA replication forks via replication fork reversal (RFR). RuvA specifically binds to HJ cruciform DNA, conferring on it an open structure. The RuvB hexamer acts as an ATP-dependent pump, pulling dsDNA into and through the RuvAB complex. RuvB forms 2 homohexamers on either side of HJ DNA bound by 1 or 2 RuvA tetramers; 4 subunits per hexamer contact DNA at a time. Coordinated motions by a converter formed by DNA-disengaged RuvB subunits stimulates ATP hydrolysis and nucleotide exchange. Immobilization of the converter enables RuvB to convert the ATP-contained energy into a lever motion, pulling 2 nucleotides of DNA out of the RuvA tetramer per ATP hydrolyzed, thus driving DNA branch migration. The RuvB motors rotate together with the DNA substrate, which together with the progressing nucleotide cycle form the mechanistic basis for DNA recombination by continuous HJ branch migration. Branch migration allows RuvC to scan DNA until it finds its consensus sequence, where it cleaves and resolves cruciform DNA. This Borrelia garinii subsp. bavariensis (strain ATCC BAA-2496 / DSM 23469 / PBi) (Borreliella bavariensis) protein is Holliday junction branch migration complex subunit RuvB.